A 373-amino-acid chain; its full sequence is Lipoyl amidotransferase LIPT1, mitochondrial (373 aa).

The N-terminal 25 residues, 1-25 (MLIPLSMKNCFRLLCQHKVPAAGFK), are a transit peptide targeting the mitochondrion. The BPL/LPL catalytic domain occupies 57–243 (LEGKPILFLW…EYAAHHQVDG (187 aa)). (R)-lipoyl-5'-AMP contacts are provided by tyrosine 107, lysine 151, lysine 161, and threonine 179.

It belongs to the LplA family.

It localises to the mitochondrion. It catalyses the reaction (R)-lipoyl-5'-AMP + L-lysyl-[lipoyl-carrier protein] = N(6)-[(R)-lipoyl]-L-lysyl-[lipoyl-carrier protein] + AMP + 2 H(+). It carries out the reaction N(6)-[(R)-lipoyl]-L-lysyl-[glycine-cleavage complex H protein] + L-lysyl-[lipoyl-carrier protein] = L-lysyl-[glycine-cleavage complex H protein] + N(6)-[(R)-lipoyl]-L-lysyl-[lipoyl-carrier protein]. It functions in the pathway protein modification; protein lipoylation via exogenous pathway; protein N(6)-(lipoyl)lysine from lipoate: step 2/2. Functionally, lipoyl amidotransferase that catalyzes the transfer of lipoyl moieties from lipoyl-protein H of the glycine cleavage system (lipoyl-GCSH) to E2 subunits of the pyruvate dehydrogenase complex (PDCE2). Unable to catalyze the transfer of octanoyl from octanoyl-GCSH to PDCE2. In vitro, it is also able to catalyze the transfer of the lipoyl group from lipoyl-AMP to the specific lysine residue of lipoyl domains of lipoate-dependent enzymes but this reaction may not be physiologically relevant. This is Lipoyl amidotransferase LIPT1, mitochondrial from Mus musculus (Mouse).